The following is a 277-amino-acid chain: Acyl-coenzyme A thioesterase MBLAC2 (277 aa).

Residues histidine 80, histidine 82, aspartate 84, histidine 85, histidine 167, aspartate 186, and histidine 228 each coordinate Zn(2+).

Belongs to the metallo-beta-lactamase superfamily. Glyoxalase II family. Requires Zn(2+) as cofactor.

The protein localises to the endoplasmic reticulum membrane. Its subcellular location is the cell membrane. The catalysed reaction is hexadecanoyl-CoA + H2O = hexadecanoate + CoA + H(+). The enzyme catalyses dodecanoyl-CoA + H2O = dodecanoate + CoA + H(+). It catalyses the reaction tetradecanoyl-CoA + H2O = tetradecanoate + CoA + H(+). It carries out the reaction octadecanoyl-CoA + H2O = octadecanoate + CoA + H(+). The catalysed reaction is a beta-lactam + H2O = a substituted beta-amino acid. Acyl-CoA thioesterases are a group of enzymes that catalyze the hydrolysis of acyl-CoAs to the free fatty acid and coenzyme A (CoASH), providing the potential to regulate intracellular levels of acyl-CoAs, free fatty acids and CoASH. Has an acyl-CoA thioesterase activity towards the long chain fatty acyl-CoA thioester palmitoyl-CoA (hexadecanoyl-CoA; C16:0-CoA). Displays a substrate preference for fatty acyl-CoAs with chain-lengths C12-C18. The chain is Acyl-coenzyme A thioesterase MBLAC2 (MBLAC2) from Gallus gallus (Chicken).